The primary structure comprises 310 residues: Ribonuclease Z (310 aa).

Residues His64, His66, Asp68, His69, His142, Asp213, and His271 each coordinate Zn(2+). Asp68 functions as the Proton acceptor in the catalytic mechanism.

The protein belongs to the RNase Z family. Homodimer. The cofactor is Zn(2+).

It catalyses the reaction Endonucleolytic cleavage of RNA, removing extra 3' nucleotides from tRNA precursor, generating 3' termini of tRNAs. A 3'-hydroxy group is left at the tRNA terminus and a 5'-phosphoryl group is left at the trailer molecule.. Functionally, zinc phosphodiesterase, which displays some tRNA 3'-processing endonuclease activity. Probably involved in tRNA maturation, by removing a 3'-trailer from precursor tRNA. The polypeptide is Ribonuclease Z (Treponema pallidum (strain Nichols)).